A 501-amino-acid chain; its full sequence is Glycerol kinase (501 aa).

Thr-12 is a binding site for ADP. Positions 12, 13, and 14 each coordinate ATP. Thr-12 serves as a coordination point for sn-glycerol 3-phosphate. Residue Arg-16 participates in ADP binding. Arg-82, Glu-83, Tyr-135, and Asp-244 together coordinate sn-glycerol 3-phosphate. Residues Arg-82, Glu-83, Tyr-135, Asp-244, and Gln-245 each coordinate glycerol. Residues Thr-266, Gly-309, Gly-409, and Asn-413 each coordinate ADP. ATP is bound by residues Thr-266, Gly-309, and Gly-409.

This sequence belongs to the FGGY kinase family.

The catalysed reaction is glycerol + ATP = sn-glycerol 3-phosphate + ADP + H(+). It functions in the pathway polyol metabolism; glycerol degradation via glycerol kinase pathway; sn-glycerol 3-phosphate from glycerol: step 1/1. Its activity is regulated as follows. Inhibited by fructose 1,6-bisphosphate (FBP). Functionally, key enzyme in the regulation of glycerol uptake and metabolism. Catalyzes the phosphorylation of glycerol to yield sn-glycerol 3-phosphate. The chain is Glycerol kinase from Coxiella burnetii (strain RSA 331 / Henzerling II).